The sequence spans 325 residues: GMP reductase (325 aa).

Cys174 functions as the Thioimidate intermediate in the catalytic mechanism. 203-226 (LIADGGIRTHGDIAKSIRFGASMV) contacts NADP(+).

This sequence belongs to the IMPDH/GMPR family. GuaC type 2 subfamily.

It catalyses the reaction IMP + NH4(+) + NADP(+) = GMP + NADPH + 2 H(+). Catalyzes the irreversible NADPH-dependent deamination of GMP to IMP. It functions in the conversion of nucleobase, nucleoside and nucleotide derivatives of G to A nucleotides, and in maintaining the intracellular balance of A and G nucleotides. The sequence is that of GMP reductase from Staphylococcus aureus (strain MRSA252).